A 520-amino-acid chain; its full sequence is GMP synthase [glutamine-hydrolyzing] (520 aa).

The Glutamine amidotransferase type-1 domain occupies 9–202 (KILILDFGSQ…VRAICGCTGH (194 aa)). Catalysis depends on C86, which acts as the Nucleophile. Active-site residues include H176 and E178. Residues 203–395 (WTPGQIIEDA…LGLPHQMVWR (193 aa)) enclose the GMPS ATP-PPase domain. 230–236 (SGGVDSS) contributes to the ATP binding site.

In terms of assembly, homodimer.

It catalyses the reaction XMP + L-glutamine + ATP + H2O = GMP + L-glutamate + AMP + diphosphate + 2 H(+). Its pathway is purine metabolism; GMP biosynthesis; GMP from XMP (L-Gln route): step 1/1. Its function is as follows. Catalyzes the synthesis of GMP from XMP. This is GMP synthase [glutamine-hydrolyzing] from Pelobacter propionicus (strain DSM 2379 / NBRC 103807 / OttBd1).